A 323-amino-acid chain; its full sequence is Queuosine 5'-phosphate N-glycosylase/hydrolase (323 aa).

Queuosine 5'-phosphate contacts are provided by asparagine 72, tyrosine 93, lysine 199, phenylalanine 229, aspartate 231, aspartate 298, tryptophan 302, and glutamine 306. Aspartate 231 (nucleophile or transition state stabilizer) is an active-site residue.

Belongs to the QNG1 protein family. As to quaternary structure, monomer.

It catalyses the reaction queuosine 5'-phosphate + H2O = queuine + D-ribose 5-phosphate. In terms of biological role, catalyzes the hydrolysis of queuosine 5'-phosphate, releasing the nucleobase queuine (q). Is likely required for salvage of queuine from exogenous queuosine (Q) that is imported and then converted to queuosine 5'-phosphate intracellularly. In vitro, can also catalyze the release of the q base directly from Q as substrate; however, Q may not be the biologically relevant substrate. Shows a very low activity on queuosine 3',5'-diphosphate, and cannot release q from queuosine 3'-phosphate and from the 5'-nucleotides AMP, UMP, CMP or GMP, indicating specificity for the queuine base. The protein is Queuosine 5'-phosphate N-glycosylase/hydrolase of Sphaerobacter thermophilus (strain ATCC 49802 / DSM 20745 / KCCM 41009 / NCIMB 13125 / S 6022).